Reading from the N-terminus, the 275-residue chain is 3-methyl-2-oxobutanoate hydroxymethyltransferase (275 aa).

Mg(2+)-binding residues include Asp49 and Asp88. 3-methyl-2-oxobutanoate contacts are provided by residues 49–50 (DS), Asp88, and Lys118. Glu120 contacts Mg(2+). Glu187 acts as the Proton acceptor in catalysis.

It belongs to the PanB family. As to quaternary structure, homodecamer; pentamer of dimers. Requires Mg(2+) as cofactor.

The protein resides in the cytoplasm. It catalyses the reaction 3-methyl-2-oxobutanoate + (6R)-5,10-methylene-5,6,7,8-tetrahydrofolate + H2O = 2-dehydropantoate + (6S)-5,6,7,8-tetrahydrofolate. Its pathway is cofactor biosynthesis; (R)-pantothenate biosynthesis; (R)-pantoate from 3-methyl-2-oxobutanoate: step 1/2. Catalyzes the reversible reaction in which hydroxymethyl group from 5,10-methylenetetrahydrofolate is transferred onto alpha-ketoisovalerate to form ketopantoate. The polypeptide is 3-methyl-2-oxobutanoate hydroxymethyltransferase (Bordetella petrii (strain ATCC BAA-461 / DSM 12804 / CCUG 43448)).